Consider the following 245-residue polypeptide: Thiopurine S-methyltransferase (245 aa).

Position 14 is a phosphoserine (S14). 29–40 (WQGKWVTGKTIF) contacts S-adenosyl-L-methionine. Substrate is bound at residue F40. N6-acetyllysine is present on K58. Residues L69, E90, and R152 each coordinate S-adenosyl-L-methionine.

The protein belongs to the class I-like SAM-binding methyltransferase superfamily. TPMT family. As to quaternary structure, monomer.

It is found in the cytoplasm. The enzyme catalyses S-adenosyl-L-methionine + a thiopurine = S-adenosyl-L-homocysteine + a thiopurine S-methylether.. This Equus caballus (Horse) protein is Thiopurine S-methyltransferase (TPMT).